We begin with the raw amino-acid sequence, 466 residues long: Adenosylhomocysteinase (466 aa).

Substrate contacts are provided by threonine 57, aspartate 132, and glutamate 192. NAD(+) is bound at residue threonine 193–threonine 195. Residues lysine 222 and aspartate 226 each coordinate substrate. Residues asparagine 227, glycine 256–glycine 261, glutamate 279, asparagine 314, isoleucine 335–histidine 337, and asparagine 380 each bind NAD(+).

It belongs to the adenosylhomocysteinase family. The cofactor is NAD(+).

The protein resides in the cytoplasm. The catalysed reaction is S-adenosyl-L-homocysteine + H2O = L-homocysteine + adenosine. Its pathway is amino-acid biosynthesis; L-homocysteine biosynthesis; L-homocysteine from S-adenosyl-L-homocysteine: step 1/1. Its function is as follows. May play a key role in the regulation of the intracellular concentration of adenosylhomocysteine. This Rhizobium etli (strain ATCC 51251 / DSM 11541 / JCM 21823 / NBRC 15573 / CFN 42) protein is Adenosylhomocysteinase.